A 372-amino-acid polypeptide reads, in one-letter code: tRNA pseudouridine synthase D (372 aa).

Asp85 functions as the Nucleophile in the catalytic mechanism. The TRUD domain maps to Gly160–Gly330.

Belongs to the pseudouridine synthase TruD family.

It catalyses the reaction uridine(13) in tRNA = pseudouridine(13) in tRNA. Functionally, responsible for synthesis of pseudouridine from uracil-13 in transfer RNAs. The polypeptide is tRNA pseudouridine synthase D (Campylobacter jejuni subsp. jejuni serotype O:6 (strain 81116 / NCTC 11828)).